Reading from the N-terminus, the 609-residue chain is WD repeat-containing protein 1 (609 aa).

13 WD repeats span residues 6–47, 50–89, 95–137, 140–178, 182–220, 226–265, 272–308, 313–353, 360–410, 434–476, 482–520, 525–563, and 568–606; these read EIKK…IRNI, PAIA…IWDT, LLKY…LWDS, SVGE…FFEG, KFKF…IYDG, VCAL…IWDV, STFN…YLDK, KPLR…YWDS, GFSG…KMDV, MKDK…LYSI, KSDD…VFSV, VEHN…VWTV, and TRIK…EWSI.

Belongs to the WD repeat AIP1 family.

The protein localises to the cytoplasm. The protein resides in the cytoskeleton. In terms of biological role, induces disassembly of actin filaments in conjunction with ADF/cofilin family proteins. Enhances cofilin-mediated actin severing. The polypeptide is WD repeat-containing protein 1 (WDR1) (Gallus gallus (Chicken)).